The primary structure comprises 270 residues: Imidazole glycerol phosphate synthase subunit HisF (270 aa).

Catalysis depends on residues aspartate 11 and aspartate 130.

Belongs to the HisA/HisF family. In terms of assembly, heterodimer of HisH and HisF.

The protein localises to the cytoplasm. The enzyme catalyses 5-[(5-phospho-1-deoxy-D-ribulos-1-ylimino)methylamino]-1-(5-phospho-beta-D-ribosyl)imidazole-4-carboxamide + L-glutamine = D-erythro-1-(imidazol-4-yl)glycerol 3-phosphate + 5-amino-1-(5-phospho-beta-D-ribosyl)imidazole-4-carboxamide + L-glutamate + H(+). The protein operates within amino-acid biosynthesis; L-histidine biosynthesis; L-histidine from 5-phospho-alpha-D-ribose 1-diphosphate: step 5/9. Functionally, IGPS catalyzes the conversion of PRFAR and glutamine to IGP, AICAR and glutamate. The HisF subunit catalyzes the cyclization activity that produces IGP and AICAR from PRFAR using the ammonia provided by the HisH subunit. This Sorangium cellulosum (strain So ce56) (Polyangium cellulosum (strain So ce56)) protein is Imidazole glycerol phosphate synthase subunit HisF.